A 213-amino-acid polypeptide reads, in one-letter code: Probable nicotinate-nucleotide adenylyltransferase (213 aa).

The protein belongs to the NadD family.

It catalyses the reaction nicotinate beta-D-ribonucleotide + ATP + H(+) = deamido-NAD(+) + diphosphate. Its pathway is cofactor biosynthesis; NAD(+) biosynthesis; deamido-NAD(+) from nicotinate D-ribonucleotide: step 1/1. Catalyzes the reversible adenylation of nicotinate mononucleotide (NaMN) to nicotinic acid adenine dinucleotide (NaAD). This Citrobacter koseri (strain ATCC BAA-895 / CDC 4225-83 / SGSC4696) protein is Probable nicotinate-nucleotide adenylyltransferase.